Reading from the N-terminus, the 167-residue chain is Probable membrane-bound hydrogenase subunit mbhJ (167 aa).

4 residues coordinate [4Fe-4S] cluster: C35, C38, C102, and C132.

It belongs to the complex I 20 kDa subunit family. In terms of assembly, the membrane-bound hydrogenase complex is composed of MbhK and MbhL, but may also contain MbhJ. Requires [4Fe-4S] cluster as cofactor.

It localises to the cell membrane. The enzyme catalyses H2 + 2 oxidized [2Fe-2S]-[ferredoxin] = 2 reduced [2Fe-2S]-[ferredoxin] + 2 H(+). Inhibited by 0.1 mM Cu(2+). Functionally, probable subunit of a hydrogen-evolving hydrogenase that utilizes protons both as a substrate for hydrogen production and proton translocation. Acts by coupling the redox reaction via ferredoxin and iron-sulfur (Fe-S) clusters to proton translocation across the membrane, thereby conserving the redox energy in a proton gradient. In Pyrococcus furiosus (strain ATCC 43587 / DSM 3638 / JCM 8422 / Vc1), this protein is Probable membrane-bound hydrogenase subunit mbhJ.